The following is a 211-amino-acid chain: N-(5'-phosphoribosyl)anthranilate isomerase (211 aa).

Belongs to the TrpF family.

It carries out the reaction N-(5-phospho-beta-D-ribosyl)anthranilate = 1-(2-carboxyphenylamino)-1-deoxy-D-ribulose 5-phosphate. It participates in amino-acid biosynthesis; L-tryptophan biosynthesis; L-tryptophan from chorismate: step 3/5. This is N-(5'-phosphoribosyl)anthranilate isomerase from Pseudomonas aeruginosa (strain UCBPP-PA14).